A 149-amino-acid polypeptide reads, in one-letter code: Calmodulin (149 aa).

At Ala-2 the chain carries N-acetylalanine. EF-hand domains follow at residues 8 to 43, 44 to 79, 81 to 116, and 117 to 149; these read EQIA…LGQN, PTEA…KMKD, DTEE…LGEK, and LTDE…MMAK. Ca(2+)-binding residues include Asp-21, Asp-23, Asp-25, Thr-27, Glu-32, Asp-57, Asp-59, Asn-61, Thr-63, Glu-68, Asp-94, Asp-96, Asn-98, and Glu-105. Lys-116 bears the N6,N6,N6-trimethyllysine mark. Residues Asp-130, Asp-132, Asp-134, Gln-136, and Glu-141 each contribute to the Ca(2+) site.

It belongs to the calmodulin family.

Its function is as follows. Calmodulin mediates the control of a large number of enzymes, ion channels and other proteins by Ca(2+). Among the enzymes to be stimulated by the calmodulin-Ca(2+) complex are a number of protein kinases and phosphatases. The sequence is that of Calmodulin from Heterocapsa triquetra (Dinoflagellate).